The sequence spans 438 residues: Transposon Ty2-LR2 Gag polyprotein (438 aa).

Polar residues-rich tracts occupy residues 1 to 11 (MESQQLHQNPH), 19 to 39 (ASVT…SASN), and 49 to 60 (KVNSQEETTPGT). Disordered regions lie at residues 1 to 88 (MESQ…YQQH), 364 to 397 (KNVS…AKAH), and 418 to 438 (VSSQ…TERI). Positions 295-397 (ENNINVSDRL…SSKPRAAKAH (103 aa)) are RNA-binding. The segment covering 369 to 381 (TSPNTTNTKVTTR) has biased composition (low complexity).

Homotrimer.

It localises to the cytoplasm. Its function is as follows. Capsid protein (CA) is the structural component of the virus-like particle (VLP), forming the shell that encapsulates the retrotransposons dimeric RNA genome. The particles are assembled from trimer-clustered units and there are holes in the capsid shells that allow for the diffusion of macromolecules. CA also has nucleocapsid-like chaperone activity, promoting primer tRNA(i)-Met annealing to the multipartite primer-binding site (PBS), dimerization of Ty2 RNA and initiation of reverse transcription. This is Transposon Ty2-LR2 Gag polyprotein (TY2A-LR2) from Saccharomyces cerevisiae (strain ATCC 204508 / S288c) (Baker's yeast).